The following is a 355-amino-acid chain: UDP-N-acetylglucosamine--N-acetylmuramyl-(pentapeptide) pyrophosphoryl-undecaprenol N-acetylglucosamine transferase (355 aa).

Residues 13–15 (TGG), asparagine 125, arginine 162, serine 190, isoleucine 244, and glutamine 289 each bind UDP-N-acetyl-alpha-D-glucosamine.

The protein belongs to the glycosyltransferase 28 family. MurG subfamily.

Its subcellular location is the cell inner membrane. The catalysed reaction is di-trans,octa-cis-undecaprenyl diphospho-N-acetyl-alpha-D-muramoyl-L-alanyl-D-glutamyl-meso-2,6-diaminopimeloyl-D-alanyl-D-alanine + UDP-N-acetyl-alpha-D-glucosamine = di-trans,octa-cis-undecaprenyl diphospho-[N-acetyl-alpha-D-glucosaminyl-(1-&gt;4)]-N-acetyl-alpha-D-muramoyl-L-alanyl-D-glutamyl-meso-2,6-diaminopimeloyl-D-alanyl-D-alanine + UDP + H(+). Its pathway is cell wall biogenesis; peptidoglycan biosynthesis. Its function is as follows. Cell wall formation. Catalyzes the transfer of a GlcNAc subunit on undecaprenyl-pyrophosphoryl-MurNAc-pentapeptide (lipid intermediate I) to form undecaprenyl-pyrophosphoryl-MurNAc-(pentapeptide)GlcNAc (lipid intermediate II). The sequence is that of UDP-N-acetylglucosamine--N-acetylmuramyl-(pentapeptide) pyrophosphoryl-undecaprenol N-acetylglucosamine transferase from Neisseria meningitidis serogroup A / serotype 4A (strain DSM 15465 / Z2491).